We begin with the raw amino-acid sequence, 272 residues long: Hydroxyacylglutathione hydrolase (272 aa).

Histidine 62, histidine 64, aspartate 66, histidine 67, histidine 126, aspartate 146, and histidine 184 together coordinate Zn(2+).

It belongs to the metallo-beta-lactamase superfamily. Glyoxalase II family. In terms of assembly, monomer. It depends on Zn(2+) as a cofactor.

It carries out the reaction an S-(2-hydroxyacyl)glutathione + H2O = a 2-hydroxy carboxylate + glutathione + H(+). It functions in the pathway secondary metabolite metabolism; methylglyoxal degradation; (R)-lactate from methylglyoxal: step 2/2. Thiolesterase that catalyzes the hydrolysis of S-D-lactoyl-glutathione to form glutathione and D-lactic acid. The sequence is that of Hydroxyacylglutathione hydrolase from Saccharophagus degradans (strain 2-40 / ATCC 43961 / DSM 17024).